We begin with the raw amino-acid sequence, 446 residues long: Tubulin beta chain (446 aa).

Residues glutamine 11, glutamate 69, serine 138, glycine 142, threonine 143, glycine 144, asparagine 204, and asparagine 226 each contribute to the GTP site. A Mg(2+)-binding site is contributed by glutamate 69. A disordered region spans residues 421-446 (EYQQYQDAGIDEEEEEYEEELPEGEE). Acidic residues predominate over residues 429–446 (GIDEEEEEYEEELPEGEE).

The protein belongs to the tubulin family. As to quaternary structure, dimer of alpha and beta chains. A typical microtubule is a hollow water-filled tube with an outer diameter of 25 nm and an inner diameter of 15 nM. Alpha-beta heterodimers associate head-to-tail to form protofilaments running lengthwise along the microtubule wall with the beta-tubulin subunit facing the microtubule plus end conferring a structural polarity. Microtubules usually have 13 protofilaments but different protofilament numbers can be found in some organisms and specialized cells. Mg(2+) is required as a cofactor.

The protein localises to the cytoplasm. Its subcellular location is the cytoskeleton. In terms of biological role, tubulin is the major constituent of microtubules, a cylinder consisting of laterally associated linear protofilaments composed of alpha- and beta-tubulin heterodimers. Microtubules grow by the addition of GTP-tubulin dimers to the microtubule end, where a stabilizing cap forms. Below the cap, tubulin dimers are in GDP-bound state, owing to GTPase activity of alpha-tubulin. The chain is Tubulin beta chain (TUB2) from Fusarium fujikuroi (Bakanae and foot rot disease fungus).